Here is a 172-residue protein sequence, read N- to C-terminus: 3-hydroxydecanoyl-[acyl-carrier-protein] dehydratase (172 aa).

Histidine 71 is an active-site residue.

The protein belongs to the thioester dehydratase family. FabA subfamily. As to quaternary structure, homodimer.

It is found in the cytoplasm. The enzyme catalyses a (3R)-hydroxyacyl-[ACP] = a (2E)-enoyl-[ACP] + H2O. It carries out the reaction (3R)-hydroxydecanoyl-[ACP] = (2E)-decenoyl-[ACP] + H2O. It catalyses the reaction (2E)-decenoyl-[ACP] = (3Z)-decenoyl-[ACP]. It functions in the pathway lipid metabolism; fatty acid biosynthesis. In terms of biological role, necessary for the introduction of cis unsaturation into fatty acids. Catalyzes the dehydration of (3R)-3-hydroxydecanoyl-ACP to E-(2)-decenoyl-ACP and then its isomerization to Z-(3)-decenoyl-ACP. Can catalyze the dehydratase reaction for beta-hydroxyacyl-ACPs with saturated chain lengths up to 16:0, being most active on intermediate chain length. This Cronobacter sakazakii (strain ATCC BAA-894) (Enterobacter sakazakii) protein is 3-hydroxydecanoyl-[acyl-carrier-protein] dehydratase.